The chain runs to 466 residues: ATP synthase subunit beta (466 aa).

155 to 162 (GGAGVGKT) is an ATP binding site.

This sequence belongs to the ATPase alpha/beta chains family. As to quaternary structure, F-type ATPases have 2 components, CF(1) - the catalytic core - and CF(0) - the membrane proton channel. CF(1) has five subunits: alpha(3), beta(3), gamma(1), delta(1), epsilon(1). CF(0) has three main subunits: a(1), b(2) and c(9-12). The alpha and beta chains form an alternating ring which encloses part of the gamma chain. CF(1) is attached to CF(0) by a central stalk formed by the gamma and epsilon chains, while a peripheral stalk is formed by the delta and b chains.

Its subcellular location is the cell inner membrane. It carries out the reaction ATP + H2O + 4 H(+)(in) = ADP + phosphate + 5 H(+)(out). Functionally, produces ATP from ADP in the presence of a proton gradient across the membrane. The catalytic sites are hosted primarily by the beta subunits. The chain is ATP synthase subunit beta from Azoarcus sp. (strain BH72).